The chain runs to 101 residues: Protein Tat (101 aa).

Over residues 1 to 12 the composition is skewed to basic and acidic residues; it reads MEPVDPRLEPWK. The segment at 1-24 is disordered; that stretch reads MEPVDPRLEPWKHPGSQPKTASNN. Residues 1–24 form an interaction with human CREBBP region; the sequence is MEPVDPRLEPWKHPGSQPKTASNN. A transactivation region spans residues 1–48; it reads MEPVDPRLEPWKHPGSQPKTASNNCYCKRCCLHCQVCFTKKGLGISYG. The cysteine-rich stretch occupies residues 22–37; sequence SNNCYCKRCCLHCQVC. C25 and C27 together coordinate Zn(2+). K28 carries the post-translational modification N6-acetyllysine; by host PCAF. Zn(2+)-binding residues include C30, H33, C34, and C37. The segment at 38–48 is core; that stretch reads FTKKGLGISYG. The tract at residues 45–101 is disordered; it reads ISYGRKKRRQRRRAPQDSKTHQVSLSKQPASQPRGDPTGPKESKKKVERETETDPED. Positions 48–57 are enriched in basic residues; it reads GRKKRRQRRR. Positions 49–57 match the Nuclear localization signal, RNA-binding (TAR), and protein transduction motif; that stretch reads RKKRRQRRR. The tract at residues 49–86 is interaction with the host capping enzyme RNGTT; the sequence is RKKRRQRRRAPQDSKTHQVSLSKQPASQPRGDPTGPKE. K50 and K51 each carry N6-acetyllysine; by host EP300 and GCN5L2. An asymmetric dimethylarginine; by host PRMT6 mark is found at R52 and R53. A compositionally biased stretch (polar residues) spans 65 to 75; it reads HQVSLSKQPAS. K71 is covalently cross-linked (Glycyl lysine isopeptide (Lys-Gly) (interchain with G-Cter in ubiquitin)). The short motif at 78-80 is the Cell attachment site element; sequence RGD. The segment covering 83–101 has biased composition (basic and acidic residues); it reads GPKESKKKVERETETDPED.

It belongs to the lentiviruses Tat family. Interacts with host CCNT1. Associates with the P-TEFb complex composed at least of Tat, P-TEFb (CDK9 and CCNT1), TAR RNA, RNA Pol II. Recruits the HATs CREBBP, TAF1/TFIID, EP300, PCAF and GCN5L2. Interacts with host KAT5/Tip60; this interaction targets the latter to degradation. Interacts with the host deacetylase SIRT1. Interacts with host capping enzyme RNGTT; this interaction stimulates RNGTT. Binds to host KDR, and to the host integrins ITGAV/ITGB3 and ITGA5/ITGB1. Interacts with host KPNB1/importin beta-1 without previous binding to KPNA1/importin alpha-1. Interacts with EIF2AK2. Interacts with host nucleosome assembly protein NAP1L1; this interaction may be required for the transport of Tat within the nucleus, since the two proteins interact at the nuclear rim. Interacts with host C1QBP/SF2P32; this interaction involves lysine-acetylated Tat. Interacts with the host chemokine receptors CCR2, CCR3 and CXCR4. Interacts with host DPP4/CD26; this interaction may trigger an anti-proliferative effect. Interacts with host LDLR. Interacts with the host extracellular matrix metalloproteinase MMP1. Interacts with host PRMT6; this interaction mediates Tat's methylation. Interacts with, and is ubiquitinated by MDM2/Hdm2. Interacts with host PSMC3 and HTATIP2. Interacts with STAB1; this interaction may overcome SATB1-mediated repression of IL2 and IL2RA (interleukin) in T cells by binding to the same domain than HDAC1. Interacts (when acetylated) with human CDK13, thereby increasing HIV-1 mRNA splicing and promoting the production of the doubly spliced HIV-1 protein Nef. Interacts with host TBP; this interaction modulates the activity of transcriptional pre-initiation complex. Interacts with host RELA. Interacts with host PLSCR1; this interaction negatively regulates Tat transactivation activity by altering its subcellular distribution. Post-translationally, asymmetrical arginine methylation by host PRMT6 seems to diminish the transactivation capacity of Tat and affects the interaction with host CCNT1. In terms of processing, acetylation by EP300, CREBBP, GCN5L2/GCN5 and PCAF regulates the transactivation activity of Tat. EP300-mediated acetylation of Lys-50 promotes dissociation of Tat from the TAR RNA through the competitive binding to PCAF's bromodomain. In addition, the non-acetylated Tat's N-terminus can also interact with PCAF. PCAF-mediated acetylation of Lys-28 enhances Tat's binding to CCNT1. Lys-50 is deacetylated by SIRT1. Polyubiquitination by host MDM2 does not target Tat to degradation, but activates its transactivation function and fosters interaction with CCNT1 and TAR RNA. Post-translationally, phosphorylated by EIF2AK2 on serine and threonine residues adjacent to the basic region important for TAR RNA binding and function. Phosphorylation of Tat by EIF2AK2 is dependent on the prior activation of EIF2AK2 by dsRNA.

The protein localises to the host nucleus. Its subcellular location is the host nucleolus. It localises to the host cytoplasm. It is found in the secreted. In terms of biological role, transcriptional activator that increases RNA Pol II processivity, thereby increasing the level of full-length viral transcripts. Recognizes a hairpin structure at the 5'-LTR of the nascent viral mRNAs referred to as the transactivation responsive RNA element (TAR) and recruits the cyclin T1-CDK9 complex (P-TEFb complex) that will in turn hyperphosphorylate the RNA polymerase II to allow efficient elongation. The CDK9 component of P-TEFb and other Tat-activated kinases hyperphosphorylate the C-terminus of RNA Pol II that becomes stabilized and much more processive. Other factors such as HTATSF1/Tat-SF1, SUPT5H/SPT5, and HTATIP2 are also important for Tat's function. Besides its effect on RNA Pol II processivity, Tat induces chromatin remodeling of proviral genes by recruiting the histone acetyltransferases (HATs) CREBBP, EP300 and PCAF to the chromatin. This also contributes to the increase in proviral transcription rate, especially when the provirus integrates in transcriptionally silent region of the host genome. To ensure maximal activation of the LTR, Tat mediates nuclear translocation of NF-kappa-B by interacting with host RELA. Through its interaction with host TBP, Tat may also modulate transcription initiation. Tat can reactivate a latently infected cell by penetrating in it and transactivating its LTR promoter. In the cytoplasm, Tat is thought to act as a translational activator of HIV-1 mRNAs. Extracellular circulating Tat can be endocytosed by surrounding uninfected cells via the binding to several surface receptors such as CD26, CXCR4, heparan sulfate proteoglycans (HSPG) or LDLR. Neurons are rarely infected, but they internalize Tat via their LDLR. Through its interaction with nuclear HATs, Tat is potentially able to control the acetylation-dependent cellular gene expression. Modulates the expression of many cellular genes involved in cell survival, proliferation or in coding for cytokines or cytokine receptors. Tat plays a role in T-cell and neurons apoptosis. Tat induced neurotoxicity and apoptosis probably contribute to neuroAIDS. Circulating Tat also acts as a chemokine-like and/or growth factor-like molecule that binds to specific receptors on the surface of the cells, affecting many cellular pathways. In the vascular system, Tat binds to ITGAV/ITGB3 and ITGA5/ITGB1 integrins dimers at the surface of endothelial cells and competes with bFGF for heparin-binding sites, leading to an excess of soluble bFGF. The protein is Protein Tat of Homo sapiens (Human).